Here is a 609-residue protein sequence, read N- to C-terminus: MDRSFDYVKINLASPSRIREWGERKLPNGQVVGEITKPETINYRTLKPEMNGLFCERVFGPVNDWECHCGKYKRIRHKGIVCERCGVEIIDSKVRRHRMGFIELASSVTHVWYVKGRPSKIALILGMTVKELEQIVYFNSYVVTKANKDLNLSYQQLLSEADWLAIDYNDDFSLKENTISIGAEAIKTLLKNVDLQQSASEIRELLPFAKRFFSEKLIRRLRVINQFIASKFDPTWMILDILPVLPPDLRPMVQLDGGRFATSDLNDLYRRVINRNNRLARLQEIVAPELIIRNEKRMLQEAVDALIDNGKRGRAVVGLNNRPLKSLSDIIEGKQGRFRQNLLGKRVDYSGRSVIIVGPELKLNQCGLPSEMAIELFQPFVIHRLIYEGLVNNIKAAKSIIQKNGPLAWEILANVMEGHPILLNRAPTLHRLGIQSFEPILVSGRAIRLHPLVCPAFNADFDGDQMAVHIPLSLEAQSEARLLMLAPNNFLSPATGDAILTPSQDMVLGCFYLTANNPSQQLNKNHYFSDFEDAILAYQNSQIHLHTFIWVRCNNVDLTEDETCSQTQSGNLILTHGADIKSKQSSSQDTKTKYIRTTPGRILLNEIFQ.

Zn(2+)-binding residues include C67, C69, C82, and C85. D460, D462, and D464 together coordinate Mg(2+).

It belongs to the RNA polymerase beta' chain family. RpoC1 subfamily. As to quaternary structure, in plastids the minimal PEP RNA polymerase catalytic core is composed of four subunits: alpha, beta, beta', and beta''. When a (nuclear-encoded) sigma factor is associated with the core the holoenzyme is formed, which can initiate transcription. It depends on Mg(2+) as a cofactor. Zn(2+) serves as cofactor.

The protein resides in the plastid. The protein localises to the chloroplast. The catalysed reaction is RNA(n) + a ribonucleoside 5'-triphosphate = RNA(n+1) + diphosphate. Functionally, DNA-dependent RNA polymerase catalyzes the transcription of DNA into RNA using the four ribonucleoside triphosphates as substrates. The chain is DNA-directed RNA polymerase subunit beta' from Emiliania huxleyi (Coccolithophore).